Here is a 180-residue protein sequence, read N- to C-terminus: dCTP deaminase (180 aa).

DCTP contacts are provided by residues 101–106 and aspartate 117; that span reads KSSFAR. Glutamate 127 serves as the catalytic Proton donor/acceptor. Tyrosine 159 and glutamine 168 together coordinate dCTP.

Belongs to the dCTP deaminase family. As to quaternary structure, homotrimer.

It carries out the reaction dCTP + H2O + H(+) = dUTP + NH4(+). It participates in pyrimidine metabolism; dUMP biosynthesis; dUMP from dCTP (dUTP route): step 1/2. In terms of biological role, catalyzes the deamination of dCTP to dUTP. The sequence is that of dCTP deaminase from Ignicoccus hospitalis (strain KIN4/I / DSM 18386 / JCM 14125).